A 314-amino-acid chain; its full sequence is MLESPHIPVLPSEVISLLQQTKNPNPQWFLDGTAGEGGHSKLILKTFPEAKLILIDRDAVMLERAKKEILKEIGSLDRVHAFQMNFSEVDSELLQEVGCPSLDGALVDLGVSLFHFLHSGRGFTFKNDEPLDMRLEANIGGKTAADVVNYSSVLHLKKVFWEYGEERWALKIANNIVQTRHKKKFGTNTDLVKLVEASIPRKFWPKESHPATRIFQALRIEVNEELVHAEKGIRALAQCLGIGGVLTCISFHSLEDRIVKWTFRDLKDNGPFEILTKKPILPSETEIKENRASRSAKLRGLMKINPIKESRWEK.

S-adenosyl-L-methionine contacts are provided by residues 37–39, Asp56, Phe86, Asp108, and His115; that span reads GGH.

Belongs to the methyltransferase superfamily. RsmH family.

The protein resides in the cytoplasm. It carries out the reaction cytidine(1402) in 16S rRNA + S-adenosyl-L-methionine = N(4)-methylcytidine(1402) in 16S rRNA + S-adenosyl-L-homocysteine + H(+). Functionally, specifically methylates the N4 position of cytidine in position 1402 (C1402) of 16S rRNA. This Leptospira biflexa serovar Patoc (strain Patoc 1 / ATCC 23582 / Paris) protein is Ribosomal RNA small subunit methyltransferase H.